The following is a 346-amino-acid chain: Acetylserotonin O-methyltransferase (346 aa).

S-adenosyl-L-methionine contacts are provided by residues Y148, W165, D211, 236 to 238, and K253; that span reads GDF. Residue H256 is the Proton donor/acceptor of the active site. The substrate site is built by D257, N303, and Q307.

Belongs to the class I-like SAM-binding methyltransferase superfamily. Cation-independent O-methyltransferase family. Homodimer. In terms of tissue distribution, expressed in pineal gland and retina.

It carries out the reaction N-acetylserotonin + S-adenosyl-L-methionine = melatonin + S-adenosyl-L-homocysteine + H(+). The protein operates within aromatic compound metabolism; melatonin biosynthesis; melatonin from serotonin: step 1/2. In terms of biological role, catalyzes the transfer of a methyl group onto N-acetylserotonin, producing melatonin (N-acetyl-5-methoxytryptamine). The protein is Acetylserotonin O-methyltransferase (ASMT) of Gallus gallus (Chicken).